We begin with the raw amino-acid sequence, 109 residues long: Nucleoid-associated protein HD_0326 (109 aa).

This sequence belongs to the YbaB/EbfC family. In terms of assembly, homodimer.

It localises to the cytoplasm. It is found in the nucleoid. Its function is as follows. Binds to DNA and alters its conformation. May be involved in regulation of gene expression, nucleoid organization and DNA protection. This is Nucleoid-associated protein HD_0326 from Haemophilus ducreyi (strain 35000HP / ATCC 700724).